The chain runs to 250 residues: 3-deoxy-manno-octulosonate cytidylyltransferase (250 aa).

This sequence belongs to the KdsB family.

It is found in the cytoplasm. The enzyme catalyses 3-deoxy-alpha-D-manno-oct-2-ulosonate + CTP = CMP-3-deoxy-beta-D-manno-octulosonate + diphosphate. It functions in the pathway nucleotide-sugar biosynthesis; CMP-3-deoxy-D-manno-octulosonate biosynthesis; CMP-3-deoxy-D-manno-octulosonate from 3-deoxy-D-manno-octulosonate and CTP: step 1/1. It participates in bacterial outer membrane biogenesis; lipopolysaccharide biosynthesis. Functionally, activates KDO (a required 8-carbon sugar) for incorporation into bacterial lipopolysaccharide in Gram-negative bacteria. The sequence is that of 3-deoxy-manno-octulosonate cytidylyltransferase from Francisella tularensis subsp. holarctica (strain FTNF002-00 / FTA).